We begin with the raw amino-acid sequence, 86 residues long: uncharacterized protein (86 aa).

This sequence to M.jannaschii MJ1173.

This is an uncharacterized protein from Methanosarcina mazei (strain ATCC BAA-159 / DSM 3647 / Goe1 / Go1 / JCM 11833 / OCM 88) (Methanosarcina frisia).